The primary structure comprises 1076 residues: Carbamoyl phosphate synthase large chain (1076 aa).

Residues 1–402 are carboxyphosphate synthetic domain; sequence MPKREDIRKI…ALQKAIRSLE (402 aa). ATP contacts are provided by Arg-129, Arg-169, Gly-175, Gly-176, Glu-208, Val-210, Glu-215, Gly-241, Val-242, His-243, Gln-285, and Glu-299. The ATP-grasp 1 domain occupies 133 to 328; sequence KEAMRKIGLD…IAKIAAKLAV (196 aa). Positions 285, 299, and 301 each coordinate Mg(2+). Positions 285, 299, and 301 each coordinate Mn(2+). The interval 403–555 is oligomerization domain; the sequence is IGRYGLGCDG…YSTYEDENEA (153 aa). Positions 556–939 are carbamoyl phosphate synthetic domain; the sequence is LRSERKKVMI…YKAELAAGMK (384 aa). Residues 680 to 871 enclose the ATP-grasp 2 domain; the sequence is AELLERLNIP…LAKIAAKLMM (192 aa). Residues Arg-716, Lys-755, Leu-757, Glu-762, Gly-787, Val-788, His-789, Ser-790, Gln-830, and Glu-842 each contribute to the ATP site. Mg(2+) contacts are provided by Gln-830, Glu-842, and Asn-844. Mn(2+) contacts are provided by Gln-830, Glu-842, and Asn-844. The MGS-like domain occupies 938–1076; it reads MKLPLKGTVF…KSIQEYHEES (139 aa). Residues 940-1076 are allosteric domain; it reads LPLKGTVFIS…KSIQEYHEES (137 aa).

Belongs to the CarB family. As to quaternary structure, composed of two chains; the small (or glutamine) chain promotes the hydrolysis of glutamine to ammonia, which is used by the large (or ammonia) chain to synthesize carbamoyl phosphate. Tetramer of heterodimers (alpha,beta)4. Requires Mg(2+) as cofactor. It depends on Mn(2+) as a cofactor.

The enzyme catalyses hydrogencarbonate + L-glutamine + 2 ATP + H2O = carbamoyl phosphate + L-glutamate + 2 ADP + phosphate + 2 H(+). It catalyses the reaction hydrogencarbonate + NH4(+) + 2 ATP = carbamoyl phosphate + 2 ADP + phosphate + 2 H(+). The protein operates within amino-acid biosynthesis; L-arginine biosynthesis; carbamoyl phosphate from bicarbonate: step 1/1. It participates in pyrimidine metabolism; UMP biosynthesis via de novo pathway; (S)-dihydroorotate from bicarbonate: step 1/3. In terms of biological role, large subunit of the glutamine-dependent carbamoyl phosphate synthetase (CPSase). CPSase catalyzes the formation of carbamoyl phosphate from the ammonia moiety of glutamine, carbonate, and phosphate donated by ATP, constituting the first step of 2 biosynthetic pathways, one leading to arginine and/or urea and the other to pyrimidine nucleotides. The large subunit (synthetase) binds the substrates ammonia (free or transferred from glutamine from the small subunit), hydrogencarbonate and ATP and carries out an ATP-coupled ligase reaction, activating hydrogencarbonate by forming carboxy phosphate which reacts with ammonia to form carbamoyl phosphate. The polypeptide is Carbamoyl phosphate synthase large chain (Archaeoglobus fulgidus (strain ATCC 49558 / DSM 4304 / JCM 9628 / NBRC 100126 / VC-16)).